The following is a 261-amino-acid chain: High-affinity zinc uptake system membrane protein ZnuB (261 aa).

The next 7 helical transmembrane spans lie at 5–27 (FFFG…LFII), 48–70 (FAVL…FGML), 85–107 (ILGI…ISNF), 128–150 (IVIL…DLML), 172–194 (ILIF…LIAI), 215–234 (AFFS…LMSV), and 238–257 (LAIS…ISNL).

This sequence belongs to the ABC-3 integral membrane protein family.

The protein localises to the cell membrane. In terms of biological role, involved in the high-affinity zinc uptake transport system. This chain is High-affinity zinc uptake system membrane protein ZnuB (znuB), found in Buchnera aphidicola subsp. Baizongia pistaciae (strain Bp).